A 498-amino-acid chain; its full sequence is Envelope glycoprotein G (498 aa).

The first 20 residues, 1–20 (MKWATWILALGLLVVRTVVA), serve as a signal peptide directing secretion. N-linked (GlcNAc...) asparagine; by host glycosylation is found at Asn-56, Asn-86, Asn-142, and Asn-226. 2 tandem repeats follow at residues 271 to 292 (EEEAELTSSDLDNIEIEVVGSP) and 308 to 329 (EEDEELTSSDLDNIEIEVVGSP). The tract at residues 271-329 (EEEAELTSSDLDNIEIEVVGSPAAPAEGPATEEGRGAEEDEELTSSDLDNIEIEVVGSP) is 2 X 22 AA repeats of E-E-[DE]-[AE]-E-L-T-S-S-D-L-D-N-I-E-I-E-V-V-G-S-P. The interval 290–377 (GSPAAPAEGP…HRLPPEPTFV (88 aa)) is disordered. Residues 292 to 301 (PAAPAEGPAT) are compositionally biased toward low complexity. The span at 308-322 (EEDEELTSSDLDNIE) shows a compositional bias: acidic residues. The span at 329–342 (PRPPASSPPPPPPR) shows a compositional bias: pro residues. The span at 346 to 364 (RGRDHDHDHGHHRADDRGP) shows a compositional bias: basic and acidic residues. Asn-443 carries N-linked (GlcNAc...) asparagine; by host glycosylation. The helical transmembrane segment at 463-483 (VALAGLVVVGIVIMCLHMAII) threads the bilayer.

This sequence belongs to the alphaherpesvirinae glycoprotein G family.

It is found in the virion membrane. In terms of biological role, chemokine-binding protein that inhibits neutrophils' chemotaxis. This Sus scrofa (Pig) protein is Envelope glycoprotein G (gG).